A 446-amino-acid chain; its full sequence is Tubulin beta-4 chain (446 aa).

GTP-binding residues include glutamine 11, glutamate 69, serine 138, glycine 142, threonine 143, glycine 144, asparagine 204, and asparagine 226. Position 69 (glutamate 69) interacts with Mg(2+). Residues 417 to 426 (DLVSEYQQYQ) are compositionally biased toward polar residues. Residues 417 to 446 (DLVSEYQQYQDATADEEGDYEDEDEALHDE) are disordered. The segment covering 429–446 (TADEEGDYEDEDEALHDE) has biased composition (acidic residues).

The protein belongs to the tubulin family. In terms of assembly, dimer of alpha and beta chains. A typical microtubule is a hollow water-filled tube with an outer diameter of 25 nm and an inner diameter of 15 nM. Alpha-beta heterodimers associate head-to-tail to form protofilaments running lengthwise along the microtubule wall with the beta-tubulin subunit facing the microtubule plus end conferring a structural polarity. Microtubules usually have 13 protofilaments but different protofilament numbers can be found in some organisms and specialized cells. It depends on Mg(2+) as a cofactor.

It localises to the cytoplasm. Its subcellular location is the cytoskeleton. In terms of biological role, tubulin is the major constituent of microtubules, a cylinder consisting of laterally associated linear protofilaments composed of alpha- and beta-tubulin heterodimers. Microtubules grow by the addition of GTP-tubulin dimers to the microtubule end, where a stabilizing cap forms. Below the cap, tubulin dimers are in GDP-bound state, owing to GTPase activity of alpha-tubulin. This is Tubulin beta-4 chain (TUBB4) from Eleusine indica (Goosegrass).